The sequence spans 193 residues: Holliday junction branch migration complex subunit RuvA (193 aa).

The segment at 1–64 (MIGRIAGILL…EDAHLLYGFL (64 aa)) is domain I. The domain II stretch occupies residues 65-139 (TQQERTTFRE…GKLGADLGAL (75 aa)). The segment at 139 to 143 (LAGAA) is flexible linker. The tract at residues 144–193 (SPSDHATDILNALLALGYSEKEGLAAIKNVPAGTGVSEGIKLALKALSKA) is domain III.

The protein belongs to the RuvA family. In terms of assembly, homotetramer. Forms an RuvA(8)-RuvB(12)-Holliday junction (HJ) complex. HJ DNA is sandwiched between 2 RuvA tetramers; dsDNA enters through RuvA and exits via RuvB. An RuvB hexamer assembles on each DNA strand where it exits the tetramer. Each RuvB hexamer is contacted by two RuvA subunits (via domain III) on 2 adjacent RuvB subunits; this complex drives branch migration. In the full resolvosome a probable DNA-RuvA(4)-RuvB(12)-RuvC(2) complex forms which resolves the HJ.

The protein localises to the cytoplasm. The RuvA-RuvB-RuvC complex processes Holliday junction (HJ) DNA during genetic recombination and DNA repair, while the RuvA-RuvB complex plays an important role in the rescue of blocked DNA replication forks via replication fork reversal (RFR). RuvA specifically binds to HJ cruciform DNA, conferring on it an open structure. The RuvB hexamer acts as an ATP-dependent pump, pulling dsDNA into and through the RuvAB complex. HJ branch migration allows RuvC to scan DNA until it finds its consensus sequence, where it cleaves and resolves the cruciform DNA. This chain is Holliday junction branch migration complex subunit RuvA, found in Burkholderia cenocepacia (strain ATCC BAA-245 / DSM 16553 / LMG 16656 / NCTC 13227 / J2315 / CF5610) (Burkholderia cepacia (strain J2315)).